The chain runs to 110 residues: MLEKTMRMNYLYDFYQALLTPKQRNYMALYYLDDYSLGEIAEQYEVSRQAVYDNIRRTEAMLEQYEEKLGLLRKYERRRQIIERLKDYISRRYGADAELAALVRELDELD.

The protein belongs to the UPF0122 family.

Functionally, might take part in the signal recognition particle (SRP) pathway. This is inferred from the conservation of its genetic proximity to ftsY/ffh. May be a regulatory protein. In Geobacillus kaustophilus (strain HTA426), this protein is UPF0122 protein GK1195.